The following is a 243-amino-acid chain: Triosephosphate isomerase (243 aa).

9-11 (NWK) contributes to the substrate binding site. H96 acts as the Electrophile in catalysis. The active-site Proton acceptor is E165. Residues G171, S204, and 225 to 226 (GG) contribute to the substrate site.

This sequence belongs to the triosephosphate isomerase family. As to quaternary structure, homodimer.

The protein resides in the cytoplasm. It carries out the reaction D-glyceraldehyde 3-phosphate = dihydroxyacetone phosphate. Its pathway is carbohydrate biosynthesis; gluconeogenesis. It participates in carbohydrate degradation; glycolysis; D-glyceraldehyde 3-phosphate from glycerone phosphate: step 1/1. In terms of biological role, involved in the gluconeogenesis. Catalyzes stereospecifically the conversion of dihydroxyacetone phosphate (DHAP) to D-glyceraldehyde-3-phosphate (G3P). The protein is Triosephosphate isomerase of Synechococcus sp. (strain CC9902).